Reading from the N-terminus, the 113-residue chain is Transmembrane protein 256 (113 aa).

The N-terminal stretch at 1 to 29 is a signal peptide; sequence MAGVGAAFRRLGALSGAGALGLASYGAHG. The Extracellular portion of the chain corresponds to 30 to 63; the sequence is AQFPDAYGKELFDKANKHHFLHSLALLGVPSCRK. Lys-43 is modified (N6-acetyllysine). Residues 64 to 84 form a helical membrane-spanning segment; sequence PVWAGLLLASGTTLFCTSFYY. The Cytoplasmic portion of the chain corresponds to 85 to 92; the sequence is QALSGDTS. Residues 93 to 113 form a helical membrane-spanning segment; sequence IQTLGPVGGSLLILGWLALAF.

Belongs to the TMEM256 family.

The protein resides in the membrane. This chain is Transmembrane protein 256 (Tmem256), found in Mus musculus (Mouse).